The following is a 339-amino-acid chain: Methionine import ATP-binding protein MetN 2 (339 aa).

Residues 2–241 enclose the ABC transporter domain; that stretch reads ISFNNVSKVY…PKTKTTQNFV (240 aa). Residue 38–45 coordinates ATP; sequence GFSGAGKS.

The protein belongs to the ABC transporter superfamily. Methionine importer (TC 3.A.1.24) family. In terms of assembly, the complex is composed of two ATP-binding proteins (MetN), two transmembrane proteins (MetI) and a solute-binding protein (MetQ).

The protein resides in the cell membrane. It carries out the reaction L-methionine(out) + ATP + H2O = L-methionine(in) + ADP + phosphate + H(+). The catalysed reaction is D-methionine(out) + ATP + H2O = D-methionine(in) + ADP + phosphate + H(+). Part of the ABC transporter complex MetNIQ involved in methionine import. Responsible for energy coupling to the transport system. The chain is Methionine import ATP-binding protein MetN 2 from Bacillus cereus (strain ATCC 10987 / NRS 248).